The following is a 121-amino-acid chain: Large ribosomal subunit protein uL14 (121 aa).

It belongs to the universal ribosomal protein uL14 family. As to quaternary structure, part of the 50S ribosomal subunit. Forms a cluster with proteins L3 and L19. In the 70S ribosome, L14 and L19 interact and together make contacts with the 16S rRNA in bridges B5 and B8.

Functionally, binds to 23S rRNA. Forms part of two intersubunit bridges in the 70S ribosome. This Prochlorococcus marinus (strain MIT 9301) protein is Large ribosomal subunit protein uL14.